Reading from the N-terminus, the 645-residue chain is Chlorophyllide a oxygenase, chloroplastic (645 aa).

Residues 1–46 (MLPASLQRKAAAVGGRGPTNQSRVAVRVSAQPKEAPPASTPIVEDP) are disordered. A coiled-coil region spans residues 105-218 (QARQKLEYLR…RKASDLDIKE (114 aa)). The disordered stretch occupies residues 258–287 (ATTVTQEVPSTSYGTPVDRAPRRSKAAIRR). Residues 259 to 271 (TTVTQEVPSTSYG) show a composition bias toward polar residues. The 102-residue stretch at 305 to 406 (WYPAEFSARL…CAEKDGFIWV (102 aa)) folds into the Rieske domain. Residues C346, H348, C365, and H368 each contribute to the [2Fe-2S] cluster site. Residues E446, D450, H453, and H458 each contribute to the Fe cation site.

Its subcellular location is the plastid. The protein localises to the chloroplast inner membrane. It localises to the chloroplast thylakoid membrane. The enzyme catalyses chlorophyllide a + 2 NADPH + 2 O2 + 2 H(+) = chlorophyllide b + 2 NADP(+) + 3 H2O. Catalyzes a two-step oxygenase reaction involved in the synthesis of chlorophyll b. Acts specifically on the non-esterified chlorophyllide a and not on chlorophyll a. In Chlamydomonas reinhardtii (Chlamydomonas smithii), this protein is Chlorophyllide a oxygenase, chloroplastic (CAO).